The primary structure comprises 799 residues: Phospholipase A-2-activating protein (799 aa).

WD repeat units follow at residues glycine 21–isoleucine 62, glycine 69–threonine 113, glycine 116–glutamine 154, glycine 155–leucine 194, histidine 196–tyrosine 233, glycine 235–arginine 274, and proline 276–glutamate 314. A PFU domain is found at glutamine 372 to glycine 471. The PUL domain occupies alanine 537 to methionine 798. 6 ARM repeats span residues alanine 550–glycine 592, glycine 593–serine 624, isoleucine 625–cysteine 673, aspartate 674–lysine 719, valine 720–glycine 759, and aspartate 760–leucine 799.

It belongs to the WD repeat PLAP family.

The protein localises to the nucleus. It localises to the cytoplasm. It is found in the synapse. Plays a role in protein ubiquitination, sorting and degradation through its association with VCP. Involved in ubiquitin-mediated membrane proteins trafficking to late endosomes in an ESCRT-dependent manner, and hence plays a role in synaptic vesicle recycling. May play a role in macroautophagy, regulating for instance the clearance of damaged lysosomes. Plays a role in cerebellar Purkinje cell development. Positively regulates cytosolic and calcium-independent phospholipase A2 activities in a tumor necrosis factor alpha (TNF-alpha)- or lipopolysaccharide (LPS)-dependent manner, and hence prostaglandin E2 biosynthesis. In Xenopus laevis (African clawed frog), this protein is Phospholipase A-2-activating protein (plaa).